Consider the following 306-residue polypeptide: Anamorsin homolog (306 aa).

Residues 1-25 (MVPPREDVTVRIVCERRRTAGKEAR) are compositionally biased toward basic and acidic residues. Residues 1–51 (MVPPREDVTVRIVCERRRTAGKEARPPPSAKPTPGNTSSHPNAKETHRSNE) form a disordered region. An N-terminal SAM-like domain region spans residues 59-190 (KQSHRRSIMA…RRNNTTNSVA (132 aa)). A linker region spans residues 191–218 (TLNFASNNNNGNDLLIDEDNLLTDASNL). 4 residues coordinate [2Fe-2S] cluster: cysteine 236, cysteine 242, cysteine 245, and cysteine 247. The interval 236-247 (CSGRAPCDDCTC) is fe-S binding site A. Over residues 252–265 (GAKEGNSEQPKEIK) the composition is skewed to basic and acidic residues. The tract at residues 252 to 272 (GAKEGNSEQPKEIKSSSCGKC) is disordered. 4 residues coordinate [4Fe-4S] cluster: cysteine 269, cysteine 272, cysteine 280, and cysteine 283. Short sequence motifs (cx2C motif) lie at residues 269-272 (CGKC) and 280-283 (CASC). Residues 269–283 (CGKCSLGDAFRCASC) are fe-S binding site B.

The protein belongs to the anamorsin family. As to quaternary structure, monomer. [2Fe-2S] cluster is required as a cofactor. The cofactor is [4Fe-4S] cluster.

It is found in the cytoplasm. The protein localises to the mitochondrion intermembrane space. Its function is as follows. Component of the cytosolic iron-sulfur (Fe-S) protein assembly (CIA) machinery. Required for the maturation of extramitochondrial Fe-S proteins. Part of an electron transfer chain functioning in an early step of cytosolic Fe-S biogenesis, facilitating the de novo assembly of a [4Fe-4S] cluster on the cytosolic Fe-S scaffold complex. Electrons are transferred from NADPH via a FAD- and FMN-containing diflavin oxidoreductase. Together with the diflavin oxidoreductase, also required for the assembly of the diferric tyrosyl radical cofactor of ribonucleotide reductase (RNR), probably by providing electrons for reduction during radical cofactor maturation in the catalytic small subunit. This is Anamorsin homolog from Phaeodactylum tricornutum (strain CCAP 1055/1).